A 478-amino-acid chain; its full sequence is Metalloendopeptidase OMA1, mitochondrial (478 aa).

The tract at residues 134–164 is stress-sensor region; that stretch reads LGRSIRKWWVALPANKKQLFREWSWRRRWHF. Residues 163 to 183 form a helical membrane-spanning segment; the sequence is HFLGAGTGLLFIASLFFFTHL. H296 provides a ligand contact to Zn(2+). Residue E297 is part of the active site. Positions 300 and 361 each coordinate Zn(2+). Cysteines 376 and 434 form a disulfide.

Belongs to the peptidase M48 family. As to quaternary structure, homooligomer. Zn(2+) serves as cofactor. Autocatalytically cleaved in response to mitochondrial depolarization both at the N-terminus and C-terminus to generate the short active form (S-OMA1). The S-OMA1 form is unstable. Post-translationally, may form a redox-dependent disulfide bond. Exists in a semi-oxidized state and is activated by prolonged hypoxia.

It is found in the mitochondrion inner membrane. With respect to regulation, protease activity is activated upon autocatalytic cleavage in response to mitochondrial depolarization. Functionally, metalloprotease that is part of the quality control system in the inner membrane of mitochondria. Activated in response to various mitochondrial stress, leading to the proteolytic cleavage of target proteins, such as opa1 and dele1. Involved in the fusion of the mitochondrial inner membranes by mediating cleavage of opa1 at S1 position, generating the soluble opa1 (S-opa1), which cooperates with the membrane form (L-opa1) to coordinate the fusion of mitochondrial inner membranes. Following stress conditions that induce loss of mitochondrial membrane potential, mediates cleavage of opa1, leading to excess production of soluble opa1 (S-opa1) and negative regulation of mitochondrial fusion. Also acts as an activator of the integrated stress response (ISR): in response to mitochondrial stress, mediates cleavage of dele1 to generate the processed form of dele1 (S-DELE1), which translocates to the cytosol and activates eif2ak1/hri to trigger the ISR. Required for the stability of the respiratory supercomplexes. The protein is Metalloendopeptidase OMA1, mitochondrial of Danio rerio (Zebrafish).